Consider the following 514-residue polypeptide: ATP synthase subunit alpha (514 aa).

170–177 lines the ATP pocket; sequence GDRQTGKT.

Belongs to the ATPase alpha/beta chains family. In terms of assembly, F-type ATPases have 2 components, CF(1) - the catalytic core - and CF(0) - the membrane proton channel. CF(1) has five subunits: alpha(3), beta(3), gamma(1), delta(1), epsilon(1). CF(0) has three main subunits: a(1), b(2) and c(9-12). The alpha and beta chains form an alternating ring which encloses part of the gamma chain. CF(1) is attached to CF(0) by a central stalk formed by the gamma and epsilon chains, while a peripheral stalk is formed by the delta and b chains.

It localises to the cell inner membrane. It catalyses the reaction ATP + H2O + 4 H(+)(in) = ADP + phosphate + 5 H(+)(out). In terms of biological role, produces ATP from ADP in the presence of a proton gradient across the membrane. The alpha chain is a regulatory subunit. The polypeptide is ATP synthase subunit alpha (Psychrobacter sp. (strain PRwf-1)).